We begin with the raw amino-acid sequence, 326 residues long: Phospho-N-acetylmuramoyl-pentapeptide-transferase (326 aa).

The next 10 membrane-spanning stretches (helical) occupy residues 5-25, 51-71, 82-102, 122-142, 148-168, 180-200, 204-224, 229-249, 252-272, and 304-324; these read GLLI…PIFI, TPTM…LIMA, VWLL…DDFI, IIIA…TVIY, LQFD…VGAS, LLAG…WYGI, VVAV…VFNA, VFMG…ISIL, LEIL…SVII, and VVTT…YIEV.

This sequence belongs to the glycosyltransferase 4 family. MraY subfamily. Mg(2+) is required as a cofactor.

Its subcellular location is the cell membrane. The catalysed reaction is UDP-N-acetyl-alpha-D-muramoyl-L-alanyl-gamma-D-glutamyl-meso-2,6-diaminopimeloyl-D-alanyl-D-alanine + di-trans,octa-cis-undecaprenyl phosphate = di-trans,octa-cis-undecaprenyl diphospho-N-acetyl-alpha-D-muramoyl-L-alanyl-D-glutamyl-meso-2,6-diaminopimeloyl-D-alanyl-D-alanine + UMP. Its pathway is cell wall biogenesis; peptidoglycan biosynthesis. Catalyzes the initial step of the lipid cycle reactions in the biosynthesis of the cell wall peptidoglycan: transfers peptidoglycan precursor phospho-MurNAc-pentapeptide from UDP-MurNAc-pentapeptide onto the lipid carrier undecaprenyl phosphate, yielding undecaprenyl-pyrophosphoryl-MurNAc-pentapeptide, known as lipid I. The chain is Phospho-N-acetylmuramoyl-pentapeptide-transferase from Oceanobacillus iheyensis (strain DSM 14371 / CIP 107618 / JCM 11309 / KCTC 3954 / HTE831).